The primary structure comprises 430 residues: BSD domain-containing protein 1 (430 aa).

2 positions are modified to phosphoserine: Ser-92 and Ser-166. A BSD domain is found at 146–198; sequence WLSQFCLEEKKGEISELLVGSPSIRALYTKMVPAAVSHSEFWHRYFYKVHQLE. 2 disordered regions span residues 247 to 298 and 319 to 398; these read STFP…APEA and LAVD…WEKD. The segment covering 276–291 has biased composition (polar residues); sequence PSESSESISLVTQIAN. Basic and acidic residues predominate over residues 350–367; the sequence is PPARVETLREEAPTDLRV. The residue at position 356 (Thr-356) is a Phosphothreonine. Residues 371 to 390 are compositionally biased toward polar residues; sequence NSDSGKSTPSNNGKKGSSTD. Phosphoserine occurs at positions 387, 388, and 418.

This is BSD domain-containing protein 1 (BSDC1) from Homo sapiens (Human).